We begin with the raw amino-acid sequence, 297 residues long: tRNA (guanine(37)-N(1))/4-demethylwyosine(37)-methyltransferase Taw22 (297 aa).

S-adenosyl-L-methionine is bound by residues Arg-89, Phe-106, and 128 to 129 (EL).

It belongs to the class I-like SAM-binding methyltransferase superfamily. TRM5/TYW2 family.

It is found in the cytoplasm. The enzyme catalyses guanosine(37) in tRNA + S-adenosyl-L-methionine = N(1)-methylguanosine(37) in tRNA + S-adenosyl-L-homocysteine + H(+). It carries out the reaction 4-demethylwyosine(37) in tRNA(Phe) + S-adenosyl-L-methionine = isowyosine(37) in tRNA(Phe) + S-adenosyl-L-homocysteine + H(+). Its function is as follows. Catalyzes both the N1-methylation of guanosine and the C7-methylation of 4-demethylwyosine (imG-14) at position 37 in tRNA(Phe). The sequence is that of tRNA (guanine(37)-N(1))/4-demethylwyosine(37)-methyltransferase Taw22 from Nanoarchaeum equitans (strain Kin4-M).